Reading from the N-terminus, the 266-residue chain is Ribosomal RNA small subunit methyltransferase A (266 aa).

Asparagine 11, leucine 13, glycine 37, glutamate 57, aspartate 85, and asparagine 104 together coordinate S-adenosyl-L-methionine.

It belongs to the class I-like SAM-binding methyltransferase superfamily. rRNA adenine N(6)-methyltransferase family. RsmA subfamily.

Its subcellular location is the cytoplasm. It catalyses the reaction adenosine(1518)/adenosine(1519) in 16S rRNA + 4 S-adenosyl-L-methionine = N(6)-dimethyladenosine(1518)/N(6)-dimethyladenosine(1519) in 16S rRNA + 4 S-adenosyl-L-homocysteine + 4 H(+). Functionally, specifically dimethylates two adjacent adenosines (A1518 and A1519) in the loop of a conserved hairpin near the 3'-end of 16S rRNA in the 30S particle. May play a critical role in biogenesis of 30S subunits. This Campylobacter jejuni (strain RM1221) protein is Ribosomal RNA small subunit methyltransferase A.